The chain runs to 414 residues: MISSAVILVGGPSRGTRFRPLSFDVPKPLFKIGGREMIYHHLAALSKIESVKDVFLVGFYDESVFKDFINEVASHFPSFNRIKYLREYNCLGTGGGLYHFRDQILKGHTSNVFVMHADVCCSFPLQELLNVHHEKKALVTLMATKVSKEDASNFGCLVEEPSTGRVLHYVDKPSSYLSNIISCGIYIFDASIFDEIKKAYERRLEEVEKQLRSLDEGMEDYLSLETDVLAPLCSDSSKAIYAYNTPEFWRQIKTAGSAVPANSLYLQKAYHDGTLPKPDTEAEIIQPVFIHPNAIVSKGAKIGPNVSIGARVRIEDGARIRNSIIQEDCEISANAVVLHSILSRHCKIGKWSRVEGSPTLPSQHSTTIMRNSVKVQAITVMGADCIVHDEVRVQNCLVLPHKEIKVGLVGEIVM.

Belongs to the transferase hexapeptide repeat family.

It localises to the cytoplasm. It is found in the nucleus. It carries out the reaction alpha-D-mannose 1-phosphate + GTP + H(+) = GDP-alpha-D-mannose + diphosphate. It functions in the pathway nucleotide-sugar biosynthesis; GDP-alpha-D-mannose biosynthesis; GDP-alpha-D-mannose from alpha-D-mannose 1-phosphate (GTP route): step 1/1. Involved in cell wall synthesis where it is required for glycosylation. In Schizosaccharomyces pombe (strain 972 / ATCC 24843) (Fission yeast), this protein is Probable mannose-1-phosphate guanyltransferase.